Here is a 334-residue protein sequence, read N- to C-terminus: Glutaminase (334 aa).

The substrate site is built by Ser-76, Asn-126, Glu-170, Asn-177, Tyr-201, Tyr-253, and Val-271.

The protein belongs to the glutaminase family. In terms of assembly, homotetramer.

It carries out the reaction L-glutamine + H2O = L-glutamate + NH4(+). The sequence is that of Glutaminase from Nostoc sp. (strain PCC 7120 / SAG 25.82 / UTEX 2576).